Consider the following 220-residue polypeptide: 6-phosphogluconolactonase (220 aa).

It belongs to the glucosamine/galactosamine-6-phosphate isomerase family. 6-phosphogluconolactonase subfamily.

It carries out the reaction 6-phospho-D-glucono-1,5-lactone + H2O = 6-phospho-D-gluconate + H(+). It functions in the pathway carbohydrate degradation; pentose phosphate pathway; D-ribulose 5-phosphate from D-glucose 6-phosphate (oxidative stage): step 2/3. Hydrolysis of 6-phosphogluconolactone to 6-phosphogluconate. The protein is 6-phosphogluconolactonase (pgl) of Thermotoga maritima (strain ATCC 43589 / DSM 3109 / JCM 10099 / NBRC 100826 / MSB8).